Reading from the N-terminus, the 229-residue chain is uncharacterized protein (229 aa).

This sequence to T.pallidum TP_0315, TP_0618 and TP_0619.

This is an uncharacterized protein from Treponema pallidum (strain Nichols).